The primary structure comprises 380 residues: 4-hydroxy-3-methylbut-2-en-1-yl diphosphate synthase (flavodoxin) (380 aa).

4 residues coordinate [4Fe-4S] cluster: Cys280, Cys283, Cys315, and Glu322.

The protein belongs to the IspG family. It depends on [4Fe-4S] cluster as a cofactor.

The enzyme catalyses (2E)-4-hydroxy-3-methylbut-2-enyl diphosphate + oxidized [flavodoxin] + H2O + 2 H(+) = 2-C-methyl-D-erythritol 2,4-cyclic diphosphate + reduced [flavodoxin]. It participates in isoprenoid biosynthesis; isopentenyl diphosphate biosynthesis via DXP pathway; isopentenyl diphosphate from 1-deoxy-D-xylulose 5-phosphate: step 5/6. In terms of biological role, converts 2C-methyl-D-erythritol 2,4-cyclodiphosphate (ME-2,4cPP) into 1-hydroxy-2-methyl-2-(E)-butenyl 4-diphosphate. The polypeptide is 4-hydroxy-3-methylbut-2-en-1-yl diphosphate synthase (flavodoxin) (Cutibacterium acnes (strain DSM 16379 / KPA171202) (Propionibacterium acnes)).